Reading from the N-terminus, the 232-residue chain is Cobalt transport protein CbiM (232 aa).

6 helical membrane passes run 6–26, 43–63, 84–104, 107–127, 135–155, and 181–201; these read GFLP…FVVH, LLLG…LPSV, IMAV…AHGG, TLGA…YGVY, VPLM…TYCV, and IFAV…VIVM.

It belongs to the CbiM family. In terms of assembly, forms an energy-coupling factor (ECF) transporter complex composed of an ATP-binding protein (A component, CbiO), a transmembrane protein (T component, CbiQ) and 2 possible substrate-capture proteins (S components, CbiM and CbiN) of unknown stoichimetry.

It is found in the cell membrane. It participates in cofactor biosynthesis; adenosylcobalamin biosynthesis. Functionally, part of the energy-coupling factor (ECF) transporter complex CbiMNOQ involved in cobalt import. This Streptomyces coelicolor (strain ATCC BAA-471 / A3(2) / M145) protein is Cobalt transport protein CbiM.